A 297-amino-acid chain; its full sequence is Ribosomal RNA small subunit methyltransferase H (297 aa).

S-adenosyl-L-methionine is bound by residues 36–38 (GGH), Asp-56, Leu-90, Asp-104, and His-111.

It belongs to the methyltransferase superfamily. RsmH family.

The protein localises to the cytoplasm. The enzyme catalyses cytidine(1402) in 16S rRNA + S-adenosyl-L-methionine = N(4)-methylcytidine(1402) in 16S rRNA + S-adenosyl-L-homocysteine + H(+). Its function is as follows. Specifically methylates the N4 position of cytidine in position 1402 (C1402) of 16S rRNA. In Dictyoglomus thermophilum (strain ATCC 35947 / DSM 3960 / H-6-12), this protein is Ribosomal RNA small subunit methyltransferase H.